A 634-amino-acid polypeptide reads, in one-letter code: Threonine--tRNA ligase (634 aa).

The TGS domain maps to 1-61 (MINIRFPDGS…NSNCELRLIT (61 aa)). A catalytic region spans residues 241–532 (DHRKIGKVLD…LIEHYAGNLP (292 aa)). The Zn(2+) site is built by Cys-332, His-383, and His-509.

This sequence belongs to the class-II aminoacyl-tRNA synthetase family. Homodimer. It depends on Zn(2+) as a cofactor.

The protein localises to the cytoplasm. It carries out the reaction tRNA(Thr) + L-threonine + ATP = L-threonyl-tRNA(Thr) + AMP + diphosphate + H(+). Catalyzes the attachment of threonine to tRNA(Thr) in a two-step reaction: L-threonine is first activated by ATP to form Thr-AMP and then transferred to the acceptor end of tRNA(Thr). Also edits incorrectly charged L-seryl-tRNA(Thr). In Francisella tularensis subsp. holarctica (strain FTNF002-00 / FTA), this protein is Threonine--tRNA ligase.